A 138-amino-acid chain; its full sequence is rRNA methyltransferase 1, mitochondrial (138 aa).

The N-terminal 21 residues, 1-21 (MNNQPCSIVWRRFLTSKVKPA), are a transit peptide targeting the mitochondrion. Residues 92-113 (KQDILSSKRQQEEHKSKYSRKS) are disordered.

It belongs to the class IV-like SAM-binding methyltransferase superfamily. RNA methyltransferase TrmH family.

The protein localises to the mitochondrion. It carries out the reaction a guanosine in 21S rRNA + S-adenosyl-L-methionine = a 2'-O-methylguanosine in 21S rRNA + S-adenosyl-L-homocysteine + H(+). S-adenosyl-L-methionine-dependent 2'-O-ribose methyltransferase that catalyzes the formation of the 2'-O-methylguanosine corresponding to position 2270 in S.cerevisiae 21S mitochondrial large ribosomal RNA, a universally conserved modification in the peptidyl transferase domain of the 21S rRNA. This chain is rRNA methyltransferase 1, mitochondrial, found in Lachancea kluyveri (strain ATCC 58438 / CBS 3082 / BCRC 21498 / NBRC 1685 / JCM 7257 / NCYC 543 / NRRL Y-12651) (Yeast).